We begin with the raw amino-acid sequence, 1020 residues long: Inner tegument protein (1020 aa).

Residues 539 to 1020 (WGVRIPDRDT…EIDAIFNNTK (482 aa)) are interaction with large tegument protein.

Belongs to the herpesviridae inner tegument protein family. In terms of assembly, interacts (via C-terminus) with the large tegument protein/LTP (via N-terminus).

The protein localises to the virion tegument. Its subcellular location is the host cytoplasm. It localises to the host nucleus. It is found in the host Golgi apparatus. The protein resides in the host trans-Golgi network. Its function is as follows. Plays an essential role in cytoplasmic secondary envelopment during viral egress. Interacts with the capsid via the large tegument protein/LTP and participates in its transport to the host trans-Golgi network (TGN) where secondary envelopment occurs. Modulates tegumentation and capsid accumulation at the viral assembly complex. This chain is Inner tegument protein, found in Equine herpesvirus 1 (strain Ab4p) (EHV-1).